Reading from the N-terminus, the 230-residue chain is Cytidylate kinase (230 aa).

10–18 (GFSSTGKST) lines the ATP pocket.

It belongs to the cytidylate kinase family. Type 1 subfamily.

The protein resides in the cytoplasm. It carries out the reaction CMP + ATP = CDP + ADP. The catalysed reaction is dCMP + ATP = dCDP + ADP. This chain is Cytidylate kinase, found in Flavobacterium johnsoniae (strain ATCC 17061 / DSM 2064 / JCM 8514 / BCRC 14874 / CCUG 350202 / NBRC 14942 / NCIMB 11054 / UW101) (Cytophaga johnsonae).